Reading from the N-terminus, the 412-residue chain is uncharacterized protein (412 aa).

Cysteine 62, cysteine 68, cysteine 71, and cysteine 143 together coordinate [4Fe-4S] cluster. Residues glutamine 243, phenylalanine 270, glutamate 290, and aspartate 338 each contribute to the S-adenosyl-L-methionine site. Cysteine 364 (nucleophile) is an active-site residue.

This sequence belongs to the class I-like SAM-binding methyltransferase superfamily. RNA M5U methyltransferase family.

This is an uncharacterized protein from Mesorhizobium japonicum (strain LMG 29417 / CECT 9101 / MAFF 303099) (Mesorhizobium loti (strain MAFF 303099)).